Consider the following 385-residue polypeptide: MWRSLGLALALCLLPYGGAESQGQSPACKQAPPWNIGDQNPMLNSEGTVTVVALLQASUYLCLLQASRLEDLRIKLENQGYFNISYIVVNHQGSPSQLKHAHLKKQVSDHIAVYRQDEHQTDVWTLLNGNKDDFLIYDRCGRLVYHLGLPYSFLTFPYVEEAIKIAYCEKRCGNCSFTSLEDEAFCKNVSSATASKTTEPSEEHNHHKHHDKHGHEHLGSSKPSENQQPGALDVETSLPPSGLHHHHHHHKHKGQHRQGHLESUDMGASEGLQLSLAQRKLURRGCINQLLCKLSEESGAATSSCCCHCRHLIFEKSGSAITUQCAENLPSLCSUQGLFAEEKVIESCQCRSPPAAUHSQHVSPTEASPNUSUNNKTKKUKUNLN.

The first 19 residues, 1–19, serve as a signal peptide directing secretion; it reads MWRSLGLALALCLLPYGGA. Position 59 (U59) is a non-standard amino acid, selenocysteine. Positions 59-62 form a cross-link, cysteinyl-selenocysteine (Sec-Cys); in isoform Se-P1; that stretch reads UYLC. Residues N83, N174, and N188 are each glycosylated (N-linked (GlcNAc...) asparagine). 2 disulfides stabilise this stretch: C168–C186 and C172–C175. Residues 196–262 are disordered; it reads KTTEPSEEHN…KGQHRQGHLE (67 aa). The span at 243–258 shows a compositional bias: basic residues; sequence LHHHHHHHKHKGQHRQ. A non-standard amino acid (selenocysteine) is located at residue U264. The residue at position 269 (S269) is a Phosphoserine. Non-standard amino acids (selenocysteine) are located at U282, U323, U335, and U357. Residues 357–385 form a disordered region; the sequence is UHSQHVSPTEASPNUSUNNKTKKUKUNLN. Over residues 360–369 the composition is skewed to polar residues; sequence QHVSPTEASP. Residue T365 is glycosylated (O-linked (Hex...) threonine; partial). 4 non-standard amino acids (selenocysteine) are found at residues U371, U373, U380, and U382. A compositionally biased stretch (basic residues) spans 376–385; the sequence is KTKKUKUNLN.

The protein belongs to the selenoprotein P family. Isoform Se-P1 contains several disulfide bridges and a selenide-sulfide bond between Sec-59 and Cys-62. These bonds are speculated to serve as redox-active pairs. Post-translationally, phosphorylation sites are present in the extracellular medium. In terms of tissue distribution, widely expressed, mainly by the liver. Secreted in plasma.

The protein localises to the secreted. In terms of biological role, might be responsible for some of the extracellular antioxidant defense properties of selenium or might be involved in the transport of selenium. May supply selenium to tissues such as brain and testis. In Rattus norvegicus (Rat), this protein is Selenoprotein P.